A 310-amino-acid polypeptide reads, in one-letter code: Tyrosine recombinase XerC (310 aa).

In terms of domain architecture, Core-binding (CB) spans N11–I97. In terms of domain architecture, Tyr recombinase spans P118–D298. Residues R157, K181, H250, R253, and H276 contribute to the active site. Residue Y285 is the O-(3'-phospho-DNA)-tyrosine intermediate of the active site.

The protein belongs to the 'phage' integrase family. XerC subfamily. As to quaternary structure, forms a cyclic heterotetrameric complex composed of two molecules of XerC and two molecules of XerD.

Its subcellular location is the cytoplasm. Its function is as follows. Site-specific tyrosine recombinase, which acts by catalyzing the cutting and rejoining of the recombining DNA molecules. The XerC-XerD complex is essential to convert dimers of the bacterial chromosome into monomers to permit their segregation at cell division. It also contributes to the segregational stability of plasmids. This Vibrio parahaemolyticus serotype O3:K6 (strain RIMD 2210633) protein is Tyrosine recombinase XerC.